A 335-amino-acid chain; its full sequence is Lipoyl synthase (335 aa).

[4Fe-4S] cluster contacts are provided by Cys-55, Cys-60, Cys-66, Cys-81, Cys-85, Cys-88, and Ser-292. The region spanning 67–281 (WEDREATFLI…SKAAEEIGFL (215 aa)) is the Radical SAM core domain.

It belongs to the radical SAM superfamily. Lipoyl synthase family. Requires [4Fe-4S] cluster as cofactor.

The protein localises to the cytoplasm. It catalyses the reaction [[Fe-S] cluster scaffold protein carrying a second [4Fe-4S](2+) cluster] + N(6)-octanoyl-L-lysyl-[protein] + 2 oxidized [2Fe-2S]-[ferredoxin] + 2 S-adenosyl-L-methionine + 4 H(+) = [[Fe-S] cluster scaffold protein] + N(6)-[(R)-dihydrolipoyl]-L-lysyl-[protein] + 4 Fe(3+) + 2 hydrogen sulfide + 2 5'-deoxyadenosine + 2 L-methionine + 2 reduced [2Fe-2S]-[ferredoxin]. Its pathway is protein modification; protein lipoylation via endogenous pathway; protein N(6)-(lipoyl)lysine from octanoyl-[acyl-carrier-protein]: step 2/2. Functionally, catalyzes the radical-mediated insertion of two sulfur atoms into the C-6 and C-8 positions of the octanoyl moiety bound to the lipoyl domains of lipoate-dependent enzymes, thereby converting the octanoylated domains into lipoylated derivatives. This is Lipoyl synthase from Kocuria rhizophila (strain ATCC 9341 / DSM 348 / NBRC 103217 / DC2201).